Here is a 513-residue protein sequence, read N- to C-terminus: MQLNPSEISDLIKTRIEGLKAGADAKNTGTVISVTDGICRIHGLSGVMQGEMLEFPGNTFGLALNLERDSVGAVVLGEYEHISEGDEVKCTGRILEVPVGPELLGRVVNALGQPIDGKGPINAKKTDVIEKVAPGVIARQSVSQPVQTGLKSIDAMVPIGRGQRELIIGDRQTGKTAVAVDAIINQKGKGIFCVYVAIGQKASTIANVVRKLEEHGALEYTIVVAAAASDSAAMQYLSAYAGCTMGEYFRDRGEDALIVYDDLTKQAWAYRQVSLLLRRPPGREAYPGDVFYLHSRLLERAARVNAEHIEKITNGEVKGKTGSLTALPVIETQAGDVSAFVPTNVISITDGQIFLETDLFNAGVRPAINAGISVSRVGGAAQTKVIKKLSGGIRTDLAQYRELAAFAQFASDLDEATRKQLERGRRVTELLKQPQYQPLQVWQLAASLYAANNGFLDNVDVKDILAFEKGLHDTLKTKYADLINRIEDTKDLSKDDEAALRAAIEDFKKSAAF.

169 to 176 contacts ATP; that stretch reads GDRQTGKT.

The protein belongs to the ATPase alpha/beta chains family. As to quaternary structure, F-type ATPases have 2 components, CF(1) - the catalytic core - and CF(0) - the membrane proton channel. CF(1) has five subunits: alpha(3), beta(3), gamma(1), delta(1), epsilon(1). CF(0) has three main subunits: a(1), b(2) and c(9-12). The alpha and beta chains form an alternating ring which encloses part of the gamma chain. CF(1) is attached to CF(0) by a central stalk formed by the gamma and epsilon chains, while a peripheral stalk is formed by the delta and b chains.

It localises to the cell inner membrane. The catalysed reaction is ATP + H2O + 4 H(+)(in) = ADP + phosphate + 5 H(+)(out). Produces ATP from ADP in the presence of a proton gradient across the membrane. The alpha chain is a regulatory subunit. The chain is ATP synthase subunit alpha from Ralstonia pickettii (strain 12J).